The following is a 139-amino-acid chain: Protein archease (139 aa).

The Ca(2+) site is built by Asp12, Asp138, and Ile139.

This sequence belongs to the archease family.

Its function is as follows. Activates the tRNA-splicing ligase complex by facilitating the enzymatic turnover of catalytic subunit RtcB. Acts by promoting the guanylylation of RtcB, a key intermediate step in tRNA ligation. Can also alter the NTP specificity of RtcB such that ATP, dGTP or ITP is used efficiently. This is Protein archease from Saccharolobus islandicus (strain Y.N.15.51 / Yellowstone #2) (Sulfolobus islandicus).